Here is a 274-residue protein sequence, read N- to C-terminus: Large ribosomal subunit protein uL2 (274 aa).

2 disordered regions span residues 38-57 (KRTG…VGGG) and 224-256 (AMNP…KGYK). Basic and acidic residues predominate over residues 229–239 (DHPHGGGEGRN).

Belongs to the universal ribosomal protein uL2 family. As to quaternary structure, part of the 50S ribosomal subunit. Forms a bridge to the 30S subunit in the 70S ribosome.

Functionally, one of the primary rRNA binding proteins. Required for association of the 30S and 50S subunits to form the 70S ribosome, for tRNA binding and peptide bond formation. It has been suggested to have peptidyltransferase activity; this is somewhat controversial. Makes several contacts with the 16S rRNA in the 70S ribosome. In Acinetobacter baumannii (strain AB307-0294), this protein is Large ribosomal subunit protein uL2.